A 421-amino-acid chain; its full sequence is Alpha-tubulin N-acetyltransferase 1 (421 aa).

The N-acetyltransferase domain maps to 1–190 (MEFPFDVDAL…NNFVIFEGFF (190 aa)). Lys-56 carries the N6-acetyllysine; by autocatalysis modification. Residue 124 to 137 (FYIHESVQRHGHGR) coordinates acetyl-CoA. Lys-146 bears the N6-acetyllysine; by autocatalysis mark. Position 160-169 (160-169 (SPKLLKFLNK)) interacts with acetyl-CoA. The interval 214 to 235 (PIPAAPARKLPPKRAEGDIKPY) is disordered. Basic and acidic residues predominate over residues 226-235 (KRAEGDIKPY). N6-acetyllysine; by autocatalysis occurs at positions 233 and 244. The disordered stretch occupies residues 252–284 (PLNRAPRRATPPAHPPPRSSSLGNSPDRGPLRP). Residues Ser-272 and Ser-276 each carry the phosphoserine modification. Arg-305 carries the asymmetric dimethylarginine modification. Residue Ser-315 is modified to Phosphoserine. The residue at position 323 (Arg-323) is an Omega-N-methylarginine. A compositionally biased stretch (polar residues) spans 342-351 (FNTSFLGTGN). The segment at 342–398 (FNTSFLGTGNQERKQGEQEAEDRSASEDQVLLQDGSGEEPTHTVAPRAQAPPAQSWM) is disordered. Over residues 352 to 367 (QERKQGEQEAEDRSAS) the composition is skewed to basic and acidic residues.

Belongs to the acetyltransferase ATAT1 family. Component of the BBSome complex. Interacts with AP2 alpha-adaptins, including AP2A2, but not with AP1 gamma-adaptin (AP1G1/AP1G2); this interaction is required for efficient alpha-tubulin acetylation, hence clathrin-coated pits are sites of microtubule acetylation. In terms of processing, autoacetylation strongly increases tubulin acetylation.

The protein localises to the cytoplasm. The protein resides in the membrane. It is found in the clathrin-coated pit. Its subcellular location is the cell junction. It localises to the focal adhesion. The protein localises to the cell projection. The protein resides in the axon. It is found in the cytoskeleton. Its subcellular location is the spindle. It catalyses the reaction L-lysyl-[alpha-tubulin] + acetyl-CoA = N(6)-acetyl-L-lysyl-[alpha-tubulin] + CoA + H(+). In terms of biological role, specifically acetylates 'Lys-40' in alpha-tubulin on the lumenal side of microtubules. Promotes microtubule destabilization and accelerates microtubule dynamics; this activity may be independent of acetylation activity. Acetylates alpha-tubulin with a slow enzymatic rate, due to a catalytic site that is not optimized for acetyl transfer. Enters the microtubule through each end and diffuses quickly throughout the lumen of microtubules. Acetylates only long/old microtubules because of its slow acetylation rate since it does not have time to act on dynamically unstable microtubules before the enzyme is released. Required for normal sperm flagellar function. Promotes directional cell locomotion and chemotaxis, through AP2A2-dependent acetylation of alpha-tubulin at clathrin-coated pits that are concentrated at the leading edge of migrating cells. May facilitate primary cilium assembly. This chain is Alpha-tubulin N-acetyltransferase 1, found in Rattus norvegicus (Rat).